A 164-amino-acid polypeptide reads, in one-letter code: MSMFLGTHQNRFDAKGRVSIPASFRAALKSQAQPGDPLVILRPSHLHPCIEGWTVGAFASLATPLDEYDPFSEDHEDLAASLYADAYPLDSDKEGRIILPENLRTHAALTDEVSFMGLGRTFQIWNPEAAAERRQAARSRARTLATSRRPASAPAAGNTAGAAE.

SpoVT-AbrB domains follow at residues 7 to 57 (THQN…TVGA) and 86 to 129 (AYPL…NPEA). The segment at 133–164 (RRQAARSRARTLATSRRPASAPAAGNTAGAAE) is disordered. The span at 142-164 (RTLATSRRPASAPAAGNTAGAAE) shows a compositional bias: low complexity.

It belongs to the MraZ family. As to quaternary structure, forms oligomers.

Its subcellular location is the cytoplasm. It localises to the nucleoid. In Gluconobacter oxydans (strain 621H) (Gluconobacter suboxydans), this protein is Transcriptional regulator MraZ.